We begin with the raw amino-acid sequence, 63 residues long: Beta-toxin NaTx36 (63 aa).

One can recognise an LCN-type CS-alpha/beta domain in the interval 1–62 (KDGYPMRSDG…VYDSATSKCR (62 aa)). 4 disulfides stabilise this stretch: C11–C61, C15–C36, C22–C43, and C26–C45.

Belongs to the long (4 C-C) scorpion toxin superfamily. Sodium channel inhibitor family. Beta subfamily. As to expression, expressed by the venom gland.

Its subcellular location is the secreted. Functionally, beta toxins bind sodium channels (Nav) and shift the voltage of activation towards more negative potentials thereby affecting sodium channel activation and promoting spontaneous and repetitive firing. Only when tested on grasshopper mouse channels, this toxin inhibits Nav1.8/SCN10A sodium currents in a concentration and voltage-dependent manner (IC(50)=680 nM). This toxin hyperpolarizes the voltage dependence of Nav1.8/SCN10A activation, as well as steady-state fast inactivation and slow inactivation. In contrast to most beta scorpion toxins, this toxin inhibits grasshopper mouse Nav1.8/SCN10A currents through modulation of the domain I S4 voltage sensor, and the domain II second S5-S6 extracellular pore loop. The protein is Beta-toxin NaTx36 of Centruroides sculpturatus (Arizona bark scorpion).